The chain runs to 341 residues: Tetraacyldisaccharide 4'-kinase (341 aa).

54–61 provides a ligand contact to ATP; that stretch reads TVGGAGKT.

This sequence belongs to the LpxK family.

The enzyme catalyses a lipid A disaccharide + ATP = a lipid IVA + ADP + H(+). It participates in glycolipid biosynthesis; lipid IV(A) biosynthesis; lipid IV(A) from (3R)-3-hydroxytetradecanoyl-[acyl-carrier-protein] and UDP-N-acetyl-alpha-D-glucosamine: step 6/6. Transfers the gamma-phosphate of ATP to the 4'-position of a tetraacyldisaccharide 1-phosphate intermediate (termed DS-1-P) to form tetraacyldisaccharide 1,4'-bis-phosphate (lipid IVA). In Brucella anthropi (strain ATCC 49188 / DSM 6882 / CCUG 24695 / JCM 21032 / LMG 3331 / NBRC 15819 / NCTC 12168 / Alc 37) (Ochrobactrum anthropi), this protein is Tetraacyldisaccharide 4'-kinase.